Here is a 515-residue protein sequence, read N- to C-terminus: Adenine DNA glycosylase (515 aa).

Residues 1 to 24 (MKKLQASVRSHKKQPANHKRRRTR) show a composition bias toward basic residues. Positions 1-38 (MKKLQASVRSHKKQPANHKRRRTRALSSSQAKPSSLDG) are disordered. The Proton donor/acceptor role is filled by E105. 4 residues coordinate [4Fe-4S] cluster: C261, C268, C271, and C277. The Nudix hydrolase domain maps to 335 to 466 (PREEYSATCV…AMKKVFRMYE (132 aa)). Positions 376–398 (VTLEPSEQHQHKALLQELQRWCG) match the Nudix box motif. The segment at 468–494 (HRQGTRKGSKRSQVCPPSSRKKPSLGQ) is disordered.

The protein belongs to the Nth/MutY family. The cofactor is [4Fe-4S] cluster. Expressed in heart, lung, liver, intestine, brain and thymus.

The protein localises to the nucleus. The protein resides in the mitochondrion. The enzyme catalyses Hydrolyzes free adenine bases from 7,8-dihydro-8-oxoguanine:adenine mismatched double-stranded DNA, leaving an apurinic site.. Its function is as follows. Involved in oxidative DNA damage repair. Initiates repair of A*oxoG to C*G by removing the inappropriately paired adenine base from the DNA backbone. Possesses both adenine and 2-OH-A DNA glycosylase activities. In Mus musculus (Mouse), this protein is Adenine DNA glycosylase (Mutyh).